The chain runs to 195 residues: Thymidine kinase (195 aa).

Residues 9–16 and 89–92 each bind ATP; these read ATMNAGKS and DEAQ. Glu-90 (proton acceptor) is an active-site residue. The Zn(2+) site is built by Cys-147, Cys-149, Cys-184, and His-187.

The protein belongs to the thymidine kinase family. As to quaternary structure, homotetramer.

The protein resides in the cytoplasm. It carries out the reaction thymidine + ATP = dTMP + ADP + H(+). This chain is Thymidine kinase, found in Rhizobium meliloti (strain 1021) (Ensifer meliloti).